We begin with the raw amino-acid sequence, 276 residues long: Putative pyruvate, phosphate dikinase regulatory protein (276 aa).

152-159 (GISRTSKT) contacts ADP.

The protein belongs to the pyruvate, phosphate/water dikinase regulatory protein family. PDRP subfamily.

It carries out the reaction N(tele)-phospho-L-histidyl/L-threonyl-[pyruvate, phosphate dikinase] + ADP = N(tele)-phospho-L-histidyl/O-phospho-L-threonyl-[pyruvate, phosphate dikinase] + AMP + H(+). The catalysed reaction is N(tele)-phospho-L-histidyl/O-phospho-L-threonyl-[pyruvate, phosphate dikinase] + phosphate + H(+) = N(tele)-phospho-L-histidyl/L-threonyl-[pyruvate, phosphate dikinase] + diphosphate. Bifunctional serine/threonine kinase and phosphorylase involved in the regulation of the pyruvate, phosphate dikinase (PPDK) by catalyzing its phosphorylation/dephosphorylation. In Staphylococcus carnosus (strain TM300), this protein is Putative pyruvate, phosphate dikinase regulatory protein.